A 155-amino-acid chain; its full sequence is Superoxide dismutase [Cu-Zn] (155 aa).

The Cu cation site is built by H47, H49, and H64. C58 and C147 are joined by a disulfide. The Zn(2+) site is built by H64, H72, H81, and D84. H121 is a binding site for Cu cation. Position 144 (R144) interacts with substrate.

It belongs to the Cu-Zn superoxide dismutase family. Homodimer. Requires Cu cation as cofactor. The cofactor is Zn(2+).

It localises to the cytoplasm. It catalyses the reaction 2 superoxide + 2 H(+) = H2O2 + O2. Destroys radicals which are normally produced within the cells and which are toxic to biological systems. The protein is Superoxide dismutase [Cu-Zn] (SOD1) of Kluyveromyces lactis (strain ATCC 8585 / CBS 2359 / DSM 70799 / NBRC 1267 / NRRL Y-1140 / WM37) (Yeast).